We begin with the raw amino-acid sequence, 499 residues long: UTP--glucose-1-phosphate uridylyltransferase (499 aa).

N-acetylserine is present on Ser-2. The residue at position 17 (Ser-17) is a Phosphoserine. The residue at position 19 (Thr-19) is a Phosphothreonine. Residues Ser-21 and Ser-79 each carry the phosphoserine modification. UTP contacts are provided by residues Leu-109 to Gly-112, Lys-123, Gln-186, and Gly-215. Gly-111–Gly-112 is a binding site for substrate. Mg(2+) is bound at residue Lys-123. Residues His-216 and Asn-244–Asp-246 contribute to the substrate site. Asp-246 is a binding site for UTP. Mg(2+) is bound at residue Asp-246. Arg-369 carries the post-translational modification Omega-N-methylarginine. A UTP-binding site is contributed by Lys-388. Residue Lys-388 is part of the active site. Positions His-448 to His-499 are oligomerization.

Belongs to the UDPGP type 1 family. In terms of assembly, homooctamer.

The enzyme catalyses alpha-D-glucose 1-phosphate + UTP + H(+) = UDP-alpha-D-glucose + diphosphate. Plays a central role as a glucosyl donor in cellular metabolic pathways. In Saccharomyces cerevisiae (strain ATCC 204508 / S288c) (Baker's yeast), this protein is UTP--glucose-1-phosphate uridylyltransferase.